The chain runs to 319 residues: Ribonuclease Z (319 aa).

Zn(2+) contacts are provided by His62, His64, Asp66, His67, His139, Asp209, and His268. The active-site Proton acceptor is the Asp66.

Belongs to the RNase Z family. Homodimer. The cofactor is Zn(2+).

It catalyses the reaction Endonucleolytic cleavage of RNA, removing extra 3' nucleotides from tRNA precursor, generating 3' termini of tRNAs. A 3'-hydroxy group is left at the tRNA terminus and a 5'-phosphoryl group is left at the trailer molecule.. Its function is as follows. Zinc phosphodiesterase, which displays some tRNA 3'-processing endonuclease activity. Probably involved in tRNA maturation, by removing a 3'-trailer from precursor tRNA. This is Ribonuclease Z from Pseudomonas putida (strain ATCC 47054 / DSM 6125 / CFBP 8728 / NCIMB 11950 / KT2440).